The chain runs to 190 residues: MSLFEDLINSKIRELEELKSNLLIDIETRIRKEATAVLNKYSTQITNIESEVALERERILYSAIIEARRKIVETYEQILNDFIETIYNEVDKLRGSERYVKFLRFLIESAINYTQTKDVIIYASPKDRGVVETLAKNLGITGFVIEKDIKGGVIVMTRDGSITVDYSLETLLSNKLEELKHLIYLETHER.

It belongs to the V-ATPase E subunit family. Has multiple subunits with at least A(3), B(3), C, D, E, F, H, I and proteolipid K(x).

Its subcellular location is the cell membrane. Functionally, component of the A-type ATP synthase that produces ATP from ADP in the presence of a proton gradient across the membrane. This Pyrobaculum islandicum (strain DSM 4184 / JCM 9189 / GEO3) protein is A-type ATP synthase subunit E.